The chain runs to 344 residues: NAD-dependent alcohol dehydrogenase (344 aa).

7 residues coordinate Zn(2+): Cys-38, His-66, Asp-96, Cys-99, Cys-102, Cys-110, and Cys-152.

Belongs to the zinc-containing alcohol dehydrogenase family. As to quaternary structure, homodimer and homotetramer. The cofactor is Zn(2+).

The enzyme catalyses a primary alcohol + NAD(+) = an aldehyde + NADH + H(+). It carries out the reaction a secondary alcohol + NAD(+) = a ketone + NADH + H(+). This is NAD-dependent alcohol dehydrogenase (adh) from Sulfolobus acidocaldarius (strain ATCC 33909 / DSM 639 / JCM 8929 / NBRC 15157 / NCIMB 11770).